We begin with the raw amino-acid sequence, 37 residues long: Large ribosomal subunit protein bL36 (37 aa).

Belongs to the bacterial ribosomal protein bL36 family.

The protein is Large ribosomal subunit protein bL36 of Synechococcus sp. (strain CC9311).